We begin with the raw amino-acid sequence, 236 residues long: Uridylate kinase (236 aa).

Residue lysine 10–glycine 13 coordinates ATP. Residue glycine 52 participates in UMP binding. ATP is bound by residues glycine 53 and arginine 57. UMP contacts are provided by residues aspartate 72 and threonine 133–threonine 140. Residues threonine 160, tyrosine 166, and aspartate 169 each coordinate ATP.

Belongs to the UMP kinase family. In terms of assembly, homohexamer.

Its subcellular location is the cytoplasm. The catalysed reaction is UMP + ATP = UDP + ADP. It participates in pyrimidine metabolism; CTP biosynthesis via de novo pathway; UDP from UMP (UMPK route): step 1/1. Inhibited by UTP. Functionally, catalyzes the reversible phosphorylation of UMP to UDP. This chain is Uridylate kinase, found in Cupriavidus pinatubonensis (strain JMP 134 / LMG 1197) (Cupriavidus necator (strain JMP 134)).